We begin with the raw amino-acid sequence, 892 residues long: Putative VWFA domain-containing protein ORF892 (892 aa).

The interval 109–548 (EEQLQRRPQR…RGYAHGDEDL (440 aa)) is disordered. Over residues 129-142 (SEVANQRVSRSAEN) the composition is skewed to polar residues. The segment covering 143–162 (QGKRGNEEKQQQKTPGKTEE) has biased composition (basic and acidic residues). Residues 169–184 (ESGEEGNQQEESGEEQ) are compositionally biased toward acidic residues. Over residues 185-196 (EGVKGSRSKQRE) the composition is skewed to basic and acidic residues. Acidic residues predominate over residues 212–223 (ESGESESEEGQS). Low complexity-rich tracts occupy residues 224-238 (SEETQLSSSGEGNQQ) and 271-283 (GNGQESSGEAQNG). Positions 287 to 300 (GESEGEITESESAS) are enriched in acidic residues. The segment covering 301-323 (EEQTGSKGKSGQQGEEGQQQSGS) has biased composition (low complexity). Composition is skewed to acidic residues over residues 324–336 (EGEEGAEQEESGE) and 425–448 (SESEEGQSPEETQEGGEGGAETEE). Residues 453–466 (SEAEGTAAEGEVGQ) are compositionally biased toward low complexity. Polar residues-rich tracts occupy residues 467 to 481 (PSEQGVSSSTGSGQR) and 512 to 531 (QTGSSSESAGSEQLGSQQGE). Residues 536–546 (EGGRGYAHGDE) are compositionally biased toward basic and acidic residues. The stretch at 553–620 (QEINSILQTL…VQKLLKDLNV (68 aa)) forms a coiled coil. A VWFA domain is found at 723-892 (DFLFVIDSSG…GNIVLKRLVH (170 aa)).

The chain is Putative VWFA domain-containing protein ORF892 from Acidianus two-tailed virus (ATV).